The following is a 358-amino-acid chain: Aerobic magnesium-protoporphyrin IX monomethyl ester [oxidative] cyclase (358 aa).

It belongs to the AcsF family. It depends on Fe cation as a cofactor.

The catalysed reaction is Mg-protoporphyrin IX 13-monomethyl ester + 3 NADPH + 3 O2 + 2 H(+) = 3,8-divinyl protochlorophyllide a + 3 NADP(+) + 5 H2O. It participates in porphyrin-containing compound metabolism; chlorophyll biosynthesis. Catalyzes the formation of the isocyclic ring in chlorophyll biosynthesis in aerobic conditions. Mediates the cyclase reaction, which results in the formation of divinylprotochlorophyllide (Pchlide) characteristic of all chlorophylls from magnesium-protoporphyrin IX 13-monomethyl ester (MgPMME). This Rubrivivax gelatinosus (Rhodocyclus gelatinosus) protein is Aerobic magnesium-protoporphyrin IX monomethyl ester [oxidative] cyclase.